The following is a 910-amino-acid chain: E3 ubiquitin-protein ligase HUL5 (910 aa).

At M1 the chain carries N-acetylmethionine. The segment at 1-25 is disordered; the sequence is MLNFTGQTRRRNVNLGNRTRNSKKD. One can recognise an HECT domain in the interval 810–910; the sequence is YGGYKEEDQT…INSGARFDLS (101 aa). The Glycyl thioester intermediate role is filled by C878.

This sequence belongs to the UBE3C family. As to quaternary structure, interacts with 19S proteasomes.

It localises to the cytoplasm. It is found in the cytosol. The protein resides in the nucleus. The enzyme catalyses S-ubiquitinyl-[E2 ubiquitin-conjugating enzyme]-L-cysteine + [acceptor protein]-L-lysine = [E2 ubiquitin-conjugating enzyme]-L-cysteine + N(6)-ubiquitinyl-[acceptor protein]-L-lysine.. The protein operates within protein modification; protein ubiquitination. Non-essential E3 ubiquitin-protein ligase that specifically catalyzes 'Lys-29'- and 'Lys-48'-linked polyubiquitin chains. Accepts ubiquitin from an E2 ubiquitin-conjugating enzyme in the form of a thioester and then directly transfers the ubiquitin to targeted substrates. Associates with the proteasome and promotes elongation of ubiquitin chains on substrates bound to the proteasome. Elongation of ubiquitin chains on substrates bound to the proteasome promotes proteasomal processivity. Also promotes ubiquitin elongation of 26S proteasome subunit RPN10. Involved in the stress response required to maintain cell fitness following heat-shock: acts by mediating ubiquitination of cytosolic misfolded proteins, leading to their subsequent degradation. In Saccharomyces cerevisiae (strain ATCC 204508 / S288c) (Baker's yeast), this protein is E3 ubiquitin-protein ligase HUL5.